Consider the following 205-residue polypeptide: 3-demethoxyubiquinol 3-hydroxylase (205 aa).

Residues glutamate 54, glutamate 84, histidine 87, glutamate 136, glutamate 168, and histidine 171 each coordinate Fe cation.

The protein belongs to the COQ7 family. The cofactor is Fe cation.

It is found in the cell membrane. The enzyme catalyses a 5-methoxy-2-methyl-3-(all-trans-polyprenyl)benzene-1,4-diol + AH2 + O2 = a 3-demethylubiquinol + A + H2O. It functions in the pathway cofactor biosynthesis; ubiquinone biosynthesis. Catalyzes the hydroxylation of 2-nonaprenyl-3-methyl-6-methoxy-1,4-benzoquinol during ubiquinone biosynthesis. This chain is 3-demethoxyubiquinol 3-hydroxylase, found in Paracidovorax citrulli (strain AAC00-1) (Acidovorax citrulli).